A 235-amino-acid polypeptide reads, in one-letter code: Fibrillarin-like rRNA/tRNA 2'-O-methyltransferase (235 aa).

Residues 91 to 92, 110 to 111, 137 to 138, and 157 to 160 each bind S-adenosyl-L-methionine; these read TT, EF, DA, and DVAQ.

The protein belongs to the methyltransferase superfamily. Fibrillarin family. In terms of assembly, interacts with nop5. Component of box C/D small ribonucleoprotein (sRNP) particles that contain rpl7ae, FlpA and nop5, plus a guide RNA.

Involved in pre-rRNA and tRNA processing. Utilizes the methyl donor S-adenosyl-L-methionine to catalyze the site-specific 2'-hydroxyl methylation of ribose moieties in rRNA and tRNA. Site specificity is provided by a guide RNA that base pairs with the substrate. Methylation occurs at a characteristic distance from the sequence involved in base pairing with the guide RNA. The sequence is that of Fibrillarin-like rRNA/tRNA 2'-O-methyltransferase from Pyrobaculum neutrophilum (strain DSM 2338 / JCM 9278 / NBRC 100436 / V24Sta) (Thermoproteus neutrophilus).